A 278-amino-acid polypeptide reads, in one-letter code: Release factor glutamine methyltransferase (278 aa).

Residues 116 to 120 (GTGTG), Asp139, Trp168, and Asn182 contribute to the S-adenosyl-L-methionine site. A substrate-binding site is contributed by 182–185 (NPPY).

This sequence belongs to the protein N5-glutamine methyltransferase family. PrmC subfamily.

It carries out the reaction L-glutaminyl-[peptide chain release factor] + S-adenosyl-L-methionine = N(5)-methyl-L-glutaminyl-[peptide chain release factor] + S-adenosyl-L-homocysteine + H(+). Functionally, methylates the class 1 translation termination release factors RF1/PrfA and RF2/PrfB on the glutamine residue of the universally conserved GGQ motif. The chain is Release factor glutamine methyltransferase from Cereibacter sphaeroides (strain ATCC 17023 / DSM 158 / JCM 6121 / CCUG 31486 / LMG 2827 / NBRC 12203 / NCIMB 8253 / ATH 2.4.1.) (Rhodobacter sphaeroides).